The sequence spans 811 residues: Methionine--tRNA ligase (811 aa).

The short motif at 11–21 (PYVNNVPHLGN) is the 'HIGH' region element. Zn(2+)-binding residues include cysteine 142, cysteine 145, cysteine 155, and cysteine 158. The 'KMSKS' region signature appears at 344–348 (KFSKS). Lysine 347 lines the ATP pocket. The disordered stretch occupies residues 606 to 640 (GVSVPRTAQMPTGMNKKETDAQQKKEEREMPPPSD). The span at 620–635 (NKKETDAQQKKEEREM) shows a compositional bias: basic and acidic residues. Residues 648–753 (FSERVVLKVA…PWALPGERAT (106 aa)) form the tRNA-binding domain.

Belongs to the class-I aminoacyl-tRNA synthetase family. MetG type 1 subfamily. As to quaternary structure, homodimer. It depends on Zn(2+) as a cofactor.

It localises to the cytoplasm. The enzyme catalyses tRNA(Met) + L-methionine + ATP = L-methionyl-tRNA(Met) + AMP + diphosphate. In terms of biological role, is required not only for elongation of protein synthesis but also for the initiation of all mRNA translation through initiator tRNA(fMet) aminoacylation. This Treponema pallidum (strain Nichols) protein is Methionine--tRNA ligase.